The primary structure comprises 72 residues: Large ribosomal subunit protein uL29 (72 aa).

The protein belongs to the universal ribosomal protein uL29 family.

The sequence is that of Large ribosomal subunit protein uL29 from Chlamydia felis (strain Fe/C-56) (Chlamydophila felis).